The primary structure comprises 369 residues: Glycine oxidase (369 aa).

Residues 14–15 (II), 34–35 (ES), 42–43 (TT), 47–49 (AGM), and Val174 contribute to the FAD site. Positions 302 and 329 each coordinate substrate. Position 327–333 (327–333 (HFRNGIL)) interacts with FAD.

This sequence belongs to the DAO family. ThiO subfamily. Homotetramer. FAD is required as a cofactor.

The protein resides in the cytoplasm. The enzyme catalyses glycine + O2 + H2O = glyoxylate + H2O2 + NH4(+). The catalysed reaction is N-ethylglycine + O2 + H2O = ethylamine + glyoxylate + H2O2. It catalyses the reaction sarcosine + O2 + H2O = methylamine + glyoxylate + H2O2. It carries out the reaction D-alanine + O2 + H2O = pyruvate + H2O2 + NH4(+). The enzyme catalyses glyphosate + O2 + H2O = aminomethylphosphonate + glyoxylate + H2O2 + H(+). Its pathway is cofactor biosynthesis; thiamine diphosphate biosynthesis. With respect to regulation, is competitively inhibited by glycolate. In terms of biological role, catalyzes the FAD-dependent oxidative deamination of various amines and D-amino acids to yield the corresponding alpha-keto acids, ammonia/amine, and hydrogen peroxide. Oxidizes sarcosine (N-methylglycine), N-ethylglycine and glycine. Can also oxidize the herbicide glyphosate (N-phosphonomethylglycine). Displays lower activities on D-alanine, D-valine, D-proline and D-methionine. Does not act on L-amino acids and other D-amino acids. Is essential for thiamine biosynthesis since the oxidation of glycine catalyzed by ThiO generates the glycine imine intermediate (dehydroglycine) required for the biosynthesis of the thiazole ring of thiamine pyrophosphate. The chain is Glycine oxidase from Bacillus subtilis (strain 168).